Here is a 55-residue protein sequence, read N- to C-terminus: UPF0391 membrane protein Meso_3110 (55 aa).

2 consecutive transmembrane segments (helical) span residues 4–24 and 30–50; these read WALV…GGIA and IAQI…LFGL.

Belongs to the UPF0391 family.

The protein resides in the cell membrane. This chain is UPF0391 membrane protein Meso_3110, found in Chelativorans sp. (strain BNC1).